We begin with the raw amino-acid sequence, 353 residues long: Photosystem II protein D1 (353 aa).

At Thr2 the chain carries N-acetylthreonine. Residue Thr2 is modified to Phosphothreonine. Transmembrane regions (helical) follow at residues 29–46 (YIGW…TATS), 118–133 (HFLL…EWEL), and 142–156 (WIAV…AATA). His118 lines the chlorophyll a pocket. A pheophytin a-binding site is contributed by Tyr126. The [CaMn4O5] cluster site is built by Asp170 and Glu189. Residues 197–218 (FHMLGVAGVFGGSLFSAMHGSL) form a helical membrane-spanning segment. His198 is a binding site for chlorophyll a. A quinone-binding positions include His215 and 264-265 (SF). His215 is a binding site for Fe cation. His272 contributes to the Fe cation binding site. A helical transmembrane segment spans residues 274-288 (FLAAWPVIGIWFTAL). [CaMn4O5] cluster-binding residues include His332, Glu333, Asp342, and Ala344. A propeptide spanning residues 345–353 (SVEAPSVNG) is cleaved from the precursor.

This sequence belongs to the reaction center PufL/M/PsbA/D family. As to quaternary structure, PSII is composed of 1 copy each of membrane proteins PsbA, PsbB, PsbC, PsbD, PsbE, PsbF, PsbH, PsbI, PsbJ, PsbK, PsbL, PsbM, PsbT, PsbX, PsbY, PsbZ, Psb30/Ycf12, at least 3 peripheral proteins of the oxygen-evolving complex and a large number of cofactors. It forms dimeric complexes. The D1/D2 heterodimer binds P680, chlorophylls that are the primary electron donor of PSII, and subsequent electron acceptors. It shares a non-heme iron and each subunit binds pheophytin, quinone, additional chlorophylls, carotenoids and lipids. D1 provides most of the ligands for the Mn4-Ca-O5 cluster of the oxygen-evolving complex (OEC). There is also a Cl(-1) ion associated with D1 and D2, which is required for oxygen evolution. The PSII complex binds additional chlorophylls, carotenoids and specific lipids. serves as cofactor. In terms of processing, tyr-161 forms a radical intermediate that is referred to as redox-active TyrZ, YZ or Y-Z. C-terminally processed by CTPA; processing is essential to allow assembly of the oxygen-evolving complex and thus photosynthetic growth.

It localises to the plastid. The protein resides in the chloroplast thylakoid membrane. The enzyme catalyses 2 a plastoquinone + 4 hnu + 2 H2O = 2 a plastoquinol + O2. Functionally, photosystem II (PSII) is a light-driven water:plastoquinone oxidoreductase that uses light energy to abstract electrons from H(2)O, generating O(2) and a proton gradient subsequently used for ATP formation. It consists of a core antenna complex that captures photons, and an electron transfer chain that converts photonic excitation into a charge separation. The D1/D2 (PsbA/PsbD) reaction center heterodimer binds P680, the primary electron donor of PSII as well as several subsequent electron acceptors. This chain is Photosystem II protein D1, found in Chlorokybus atmophyticus (Soil alga).